Consider the following 267-residue polypeptide: 5'-nucleotidase SurE (267 aa).

Asp9, Asp10, Ser40, and Asn97 together coordinate a divalent metal cation.

This sequence belongs to the SurE nucleotidase family. A divalent metal cation is required as a cofactor.

It localises to the cytoplasm. The catalysed reaction is a ribonucleoside 5'-phosphate + H2O = a ribonucleoside + phosphate. Functionally, nucleotidase that shows phosphatase activity on nucleoside 5'-monophosphates. In Helicobacter pylori (strain Shi470), this protein is 5'-nucleotidase SurE.